The following is a 348-amino-acid chain: Methylthioribose-1-phosphate isomerase (348 aa).

Residues R54–A56, R96, and Q199 each bind substrate. D240 serves as the catalytic Proton donor. Substrate is bound at residue N250–K251.

Belongs to the eIF-2B alpha/beta/delta subunits family. MtnA subfamily.

It carries out the reaction 5-(methylsulfanyl)-alpha-D-ribose 1-phosphate = 5-(methylsulfanyl)-D-ribulose 1-phosphate. It functions in the pathway amino-acid biosynthesis; L-methionine biosynthesis via salvage pathway; L-methionine from S-methyl-5-thio-alpha-D-ribose 1-phosphate: step 1/6. Catalyzes the interconversion of methylthioribose-1-phosphate (MTR-1-P) into methylthioribulose-1-phosphate (MTRu-1-P). The polypeptide is Methylthioribose-1-phosphate isomerase (Thioalkalivibrio sulfidiphilus (strain HL-EbGR7)).